Consider the following 207-residue polypeptide: Holliday junction branch migration complex subunit RuvA (207 aa).

Positions 1–64 (MIGLISGQVQ…EDAQLLYGFI (64 aa)) are domain I. The interval 65–143 (DRKERDVFRQ…NIEVDNSNLE (79 aa)) is domain II. The tract at residues 144 to 152 (FAIQPAPIS) is flexible linker. Residues 153 to 207 (AEDSIIAEVEGALMSLGYKEKEAQQAIKAAKSNGETFADTQSLLKATLQQFQSFK) are domain III.

Belongs to the RuvA family. As to quaternary structure, homotetramer. Forms an RuvA(8)-RuvB(12)-Holliday junction (HJ) complex. HJ DNA is sandwiched between 2 RuvA tetramers; dsDNA enters through RuvA and exits via RuvB. An RuvB hexamer assembles on each DNA strand where it exits the tetramer. Each RuvB hexamer is contacted by two RuvA subunits (via domain III) on 2 adjacent RuvB subunits; this complex drives branch migration. In the full resolvosome a probable DNA-RuvA(4)-RuvB(12)-RuvC(2) complex forms which resolves the HJ.

Its subcellular location is the cytoplasm. Functionally, the RuvA-RuvB-RuvC complex processes Holliday junction (HJ) DNA during genetic recombination and DNA repair, while the RuvA-RuvB complex plays an important role in the rescue of blocked DNA replication forks via replication fork reversal (RFR). RuvA specifically binds to HJ cruciform DNA, conferring on it an open structure. The RuvB hexamer acts as an ATP-dependent pump, pulling dsDNA into and through the RuvAB complex. HJ branch migration allows RuvC to scan DNA until it finds its consensus sequence, where it cleaves and resolves the cruciform DNA. This Psychrobacter arcticus (strain DSM 17307 / VKM B-2377 / 273-4) protein is Holliday junction branch migration complex subunit RuvA.